Consider the following 217-residue polypeptide: Probable transaldolase (217 aa).

The Schiff-base intermediate with substrate role is filled by K83.

Belongs to the transaldolase family. Type 3B subfamily.

It localises to the cytoplasm. It carries out the reaction D-sedoheptulose 7-phosphate + D-glyceraldehyde 3-phosphate = D-erythrose 4-phosphate + beta-D-fructose 6-phosphate. It participates in carbohydrate degradation; pentose phosphate pathway; D-glyceraldehyde 3-phosphate and beta-D-fructose 6-phosphate from D-ribose 5-phosphate and D-xylulose 5-phosphate (non-oxidative stage): step 2/3. Transaldolase is important for the balance of metabolites in the pentose-phosphate pathway. This is Probable transaldolase from Chelativorans sp. (strain BNC1).